The primary structure comprises 893 residues: UPF0182 protein CLK_3152 (893 aa).

The next 7 helical transmembrane spans lie at 9 to 29 (IPLF…NFII), 49 to 69 (AIII…WMYY), 94 to 114 (LFFI…SSSY), 154 to 174 (VIIS…FILE), 202 to 222 (LAIV…IKIW), 246 to 266 (FYKI…LSIV), and 273 to 293 (VSIC…ASFL).

The protein belongs to the UPF0182 family.

The protein resides in the cell membrane. This Clostridium botulinum (strain Loch Maree / Type A3) protein is UPF0182 protein CLK_3152.